Consider the following 470-residue polypeptide: Glucose-1-phosphate adenylyltransferase large subunit 1 (470 aa).

Belongs to the bacterial/plant glucose-1-phosphate adenylyltransferase family. Heterotetramer. As to expression, prominently expressed in the leaves and a weaker expression is seen in the tubers.

It is found in the plastid. The protein resides in the chloroplast. Its subcellular location is the amyloplast. The enzyme catalyses alpha-D-glucose 1-phosphate + ATP + H(+) = ADP-alpha-D-glucose + diphosphate. Its pathway is glycan biosynthesis; starch biosynthesis. Its activity is regulated as follows. Activated by 3'phosphoglycerate, inhibited by orthophosphate. Allosteric regulation. This protein plays a role in synthesis of starch. It catalyzes the synthesis of the activated glycosyl donor, ADP-glucose from Glc-1-P and ATP. In Solanum tuberosum (Potato), this protein is Glucose-1-phosphate adenylyltransferase large subunit 1 (AGPS1).